The sequence spans 566 residues: Phosphatidylinositol 3,4,5-trisphosphate 3-phosphatase TPTE2 (566 aa).

The next 4 helical transmembrane spans lie at 135–155 (SFAF…LLLA), 173–193 (ISLA…FVEG), 208–228 (AIIV…IKFL), and 234–254 (WIHL…HLIH). The Phosphatase tensin-type domain maps to 272–448 (RRYTRDGFDL…GYFAQVKHLY (177 aa)). Cys-382 (phosphocysteine intermediate) is an active-site residue. In terms of domain architecture, C2 tensin-type spans 455-566 (RRILFIKRFI…ILHSFRLVFT (112 aa)).

Its subcellular location is the endoplasmic reticulum membrane. It localises to the golgi apparatus membrane. The catalysed reaction is a 1,2-diacyl-sn-glycero-3-phospho-(1D-myo-inositol-3,4,5-trisphosphate) + H2O = a 1,2-diacyl-sn-glycero-3-phospho-(1D-myo-inositol-4,5-bisphosphate) + phosphate. Its function is as follows. Acts as a lipid phosphatase, removing the phosphate in the D3 position of the inositol ring from phosphatidylinositol 3,4,5-trisphosphate. This is Phosphatidylinositol 3,4,5-trisphosphate 3-phosphatase TPTE2 (TPTE2) from Macaca fascicularis (Crab-eating macaque).